Here is a 376-residue protein sequence, read N- to C-terminus: UPF0754 membrane protein SERP1382 (376 aa).

A run of 2 helical transmembrane segments spans residues 4 to 24 and 356 to 376; these read ILLV…TNMI and TLGF…AIFV.

The protein belongs to the UPF0754 family.

The protein resides in the cell membrane. This is UPF0754 membrane protein SERP1382 from Staphylococcus epidermidis (strain ATCC 35984 / DSM 28319 / BCRC 17069 / CCUG 31568 / BM 3577 / RP62A).